A 419-amino-acid polypeptide reads, in one-letter code: Zinc finger protein Pegasus (419 aa).

3 C2H2-type zinc fingers span residues 79–101 (LKCR…IRIH), 107–129 (HRCH…MRSH), and 135–158 (YKCE…RRRH). 2 disordered regions span residues 203–255 (LQKP…DQDM) and 310–360 (SVNT…TPVQ). Basic and acidic residues predominate over residues 208 to 228 (SEQHHLGDFTHDLPPHAHLHQ). Polar residues-rich tracts occupy residues 310–320 (SVNTAQASSPI) and 341–360 (ERTS…TPVQ). C2H2-type zinc fingers lie at residues 366–388 (HHCP…MGCH) and 394–418 (FQCN…RGQH).

The protein belongs to the Ikaros C2H2-type zinc-finger protein family. In terms of assembly, probably self-associates.

It localises to the nucleus. In terms of biological role, transcriptional repressor that binds the core 5'GNNTGTNG-3' DNA consensus sequence. The sequence is that of Zinc finger protein Pegasus (ikzf5) from Danio rerio (Zebrafish).